The sequence spans 287 residues: Energy-coupling factor transporter ATP-binding protein EcfA (287 aa).

Residues 19 to 252 (FEIQNVSFSY…EEFLASSALD (234 aa)) enclose the ABC transporter domain. 52–59 (GHNGSGKS) is a binding site for ATP.

The protein belongs to the ABC transporter superfamily. Energy-coupling factor EcfA family. In terms of assembly, forms a stable energy-coupling factor (ECF) transporter complex composed of 2 membrane-embedded substrate-binding proteins (S component), 2 ATP-binding proteins (A component) and 2 transmembrane proteins (T component).

Its subcellular location is the cell membrane. Its function is as follows. ATP-binding (A) component of a common energy-coupling factor (ECF) ABC-transporter complex. Unlike classic ABC transporters this ECF transporter provides the energy necessary to transport a number of different substrates. This chain is Energy-coupling factor transporter ATP-binding protein EcfA, found in Malacoplasma penetrans (strain HF-2) (Mycoplasma penetrans).